Here is a 583-residue protein sequence, read N- to C-terminus: Putative amidase C869.01 (583 aa).

Residues 1 to 19 form the signal peptide; that stretch reads MKLQLLFLTLAQLAKHGLA. Residues lysine 141 and serine 222 each act as charge relay system in the active site. Serine 246 (acyl-ester intermediate) is an active-site residue.

The protein belongs to the amidase family.

The protein resides in the cytoplasm. It catalyses the reaction a monocarboxylic acid amide + H2O = a monocarboxylate + NH4(+). The protein is Putative amidase C869.01 of Schizosaccharomyces pombe (strain 972 / ATCC 24843) (Fission yeast).